Reading from the N-terminus, the 80-residue chain is Pre-core protein X (80 aa).

Residues 2 to 32 (ALTCRLRFPVPGFRGRMHRRRGMAGHGLTGG) constitute a propeptide that is removed on maturation. Residues 18–45 (MHRRRGMAGHGLTGGMRRAHHRRRRASH) form a disordered region. The segment covering 34–45 (RRAHHRRRRASH) has biased composition (basic residues). Positions 52–80 (ILPLLIPLIAAAIGAVPGIASVALQAQRH) are excised as a propeptide.

This sequence belongs to the adenoviridae core protein X family. In terms of assembly, interacts with the core-capsid bridging protein; this interaction bridges the virus core to the capsid. In terms of processing, cleaved by the viral protease during virion maturation to form the mature protein.

It is found in the host nucleus. Its subcellular location is the host nucleolus. It localises to the virion. Interacts with the viral DNA and aids in tightly condensing it within the capsid. Cleavage of pre-core protein X may serve to partially relax this structure within the mature virion prior to its entry into the nucleus. This Human adenovirus C serotype 2 (HAdV-2) protein is Pre-core protein X.